A 73-amino-acid polypeptide reads, in one-letter code: MCLPKNPHPPVTTYTSVRILSINYIRPKLYFHFLLYYTIIKTNKYTNIIRNLEHVIKVLPFLLTACSCNCRLE.

This is an uncharacterized protein from Vertebrata (FPV).